A 305-amino-acid polypeptide reads, in one-letter code: Catechol 1,2-dioxygenase (305 aa).

The Fe cation site is built by Y163, Y197, H221, and H223.

Belongs to the intradiol ring-cleavage dioxygenase family. Homodimer. It depends on Fe(3+) as a cofactor.

It carries out the reaction catechol + O2 = cis,cis-muconate + 2 H(+). It functions in the pathway aromatic compound metabolism; beta-ketoadipate pathway; 5-oxo-4,5-dihydro-2-furylacetate from catechol: step 1/3. This is Catechol 1,2-dioxygenase (catA) from Acinetobacter guillouiae (Acinetobacter genomosp. 11).